Reading from the N-terminus, the 118-residue chain is MARIAGVNIPDNKHAVISLTYIFGIGRTTAKKILDTVGIAPTTKISQLDDAQLDAIRAEVGNYMTEGDLRREVSMNIKRLVDLGCYRGIRHRRNLPVRGQNTKNNARTRKGPIRSIKR.

Residues 94 to 118 (NLPVRGQNTKNNARTRKGPIRSIKR) are disordered. A compositionally biased stretch (basic residues) spans 106–118 (ARTRKGPIRSIKR).

It belongs to the universal ribosomal protein uS13 family. As to quaternary structure, part of the 30S ribosomal subunit. Forms a loose heterodimer with protein S19. Forms two bridges to the 50S subunit in the 70S ribosome.

In terms of biological role, located at the top of the head of the 30S subunit, it contacts several helices of the 16S rRNA. In the 70S ribosome it contacts the 23S rRNA (bridge B1a) and protein L5 of the 50S subunit (bridge B1b), connecting the 2 subunits; these bridges are implicated in subunit movement. Contacts the tRNAs in the A and P-sites. The chain is Small ribosomal subunit protein uS13 from Psychrobacter sp. (strain PRwf-1).